The chain runs to 708 residues: ATP-dependent RNA helicase laf-1 (708 aa).

Low complexity predominate over residues 1 to 21 (MESNQSNNGGSGNAALNRGGR). Residues 1–191 (MESNQSNNGG…RGTSKWENRG (191 aa)) form a disordered region. Positions 48 to 70 (GAGGGGYRRGGGNSGGGGGGGYD) are enriched in gly residues. Basic and acidic residues-rich tracts occupy residues 72-83 (GYNDNRDDRDNR) and 90-99 (GRDRNYEDRG). Positions 100–123 (YNGGGGGGGNRGYNNNRGGGGGGY) are enriched in gly residues. A Q motif motif is present at residues 231 to 259 (SLFSDLSLHEWIEENIKTAGYDRPTPVQK). Residues 262–453 (IPALQGGRDL…QDFLKENYVF (192 aa)) enclose the Helicase ATP-binding domain. Position 275–282 (275–282 (AQTGSGKT)) interacts with ATP. A DEAD box motif is present at residues 397 to 400 (DEAD). Residues 465–626 (NIMQKIVWVE…ELPDWLEGMS (162 aa)) enclose the Helicase C-terminal domain. Residues 623-708 (EGMSGDMRSG…RAQPQQDWWS (86 aa)) are disordered. Gly residues-rich tracts occupy residues 630-647 (RSGG…GQRF) and 656-692 (GGSG…GGGR). A compositionally biased stretch (polar residues) spans 699–708 (RAQPQQDWWS).

This sequence belongs to the DEAD box helicase family. DDX3/DED1 subfamily. Binds RNA as a monomer at low laf-1 concentrations and as a dimer at high laf-1 concentrations. In terms of tissue distribution, expressed in the germline and soma of young adult hermaphrodites.

The protein resides in the cytoplasm. The protein localises to the cytoplasmic granule. It localises to the nucleus. It is found in the stress granule. Its subcellular location is the inflammasome. The protein resides in the cell membrane. The protein localises to the cell projection. It localises to the lamellipodium. The enzyme catalyses ATP + H2O = ADP + phosphate + H(+). Multifunctional ATP-dependent RNA helicase. Plays a role in RNA remodeling, but is not required for RNA unwinding. Binds to RNA in a concentration-dependent manner to stimulate annealing between two complementary strands of RNA. This process is also dependent upon ATP; ATP reduces binding to RNA and subsequently diminishes RNA annealing. Involved in many cellular processes, which do not necessarily require its ATPase/helicase catalytic activities. Involved in the regulation of transcription and translation initiation. Involved in innate immunity. Involved in both stress and inflammatory responses. Promotes liquid-liquid phase separation of P granules, which is a process important for intracellular organization and stress granule assembly. Required for embryonic development. Plays a role in sexual cell fate determination by negatively regulating the translation of the sex determining protein tra-2. May play a protective role in the response to heat and oxidative stress. May negatively regulate extrinsic apoptotic signaling pathway via death domain receptors. May be involved in mitotic chromosome segregation. This chain is ATP-dependent RNA helicase laf-1, found in Caenorhabditis elegans.